A 512-amino-acid polypeptide reads, in one-letter code: MAVDKLPLLAKFEPVSLVGLVLLSGLFLLLTASRKSDLPLVNGKRPFEFGIAKARQRYLKNAHNLITAGLAKVCNSAGAFRIVTENGTRTILSPNYADDIRSHRDLSLSAALVKEHHVNIAGFDAVKVTVTSDIIQDTVRTKLTQNLLNITEPMSEEATILLKEQWTDNTDWHDVALRPKTLGIVAQLSSRVFLGDKVCRNPDWLRITVNYTIDSLMAAAELRLWPEMLRPLAARFLPKCKKIRKQLEEARDIIQPVIDERRLAQQEAIKQGKPQERYHDAIQWLAENTKDRSFEPAAMQLALSTAAIHTTTDLLGQTVLDLCGRDELIQELREEIISVFKDGSWDKSTMYKLKLMDSVIKESQRVKPMAIAKMARCAEEDVKLSDGTIIPKGEIILVSCSKMWDANVYPDPNTFDPHRFLKMRQPGSDQESFAQLVSPSPEHMGFGFGKHACPGRFFAAAELKVALCHIIMKYDFKVADGCNPQVLKSGMRLAADPFAKIAIRRRQEEVTF.

A helical membrane pass occupies residues 12–32; the sequence is FEPVSLVGLVLLSGLFLLLTA. N-linked (GlcNAc...) asparagine glycans are attached at residues N86, N149, and N210. C453 is a binding site for heme.

Belongs to the cytochrome P450 family. Heme is required as a cofactor.

The protein localises to the membrane. It participates in secondary metabolite biosynthesis; terpenoid biosynthesis. Functionally, cytochrome P450 monooxygenase; part of the gene cluster that mediates the biosynthesis of andrastins, meroterpenoid compounds that exhibit inhibitory activity against ras farnesyltransferase, suggesting that they could be promising leads for antitumor agents. The first step of the pathway is the synthesis of 3,5-dimethylorsellinic acid (DMOA) by the polyketide synthase adrD via condensation of one acetyl-CoA starter unit with 3 malonyl-CoA units and 2 methylations. DMAO is then converted to farnesyl-DMAO by the prenyltransferase adrG. The methyltransferase adrK catalyzes the methylation of the carboxyl group of farnesyl-DMAO to farnesyl-DMAO methyl ester which is further converted to epoxyfarnesyl-DMAO methyl ester by the FAD-dependent monooxygenase adrH. The terpene cyclase adrI then catalyzes the carbon skeletal rearrangement to generate the andrastin E, the first compound in the pathway having the andrastin scaffold, with the tetracyclic ring system. The post-cyclization tailoring enzymes adrF, adrE, adrJ, and adrA, are involved in the conversion of andrastin E into andrastin A. The short chain dehydrogenase adrF is responsible for the oxidation of the C-3 a hydroxyl group of andrastin E to yield the corresponding ketone, andrastin D. The ketoreductase adrE stereoselectively reduces the carbonyl moiety to reverse the stereochemistry of the C-3 position to yield andrastin F. The acetyltransferase adrJ is the acetyltransferase that attaches the acetyl group to the C-3 hydroxyl group of andrastin F to yield andrastin C. Finally, the cytochrome P450 monooxygenase adrA catalyzes two sequential oxidation reactions of the C-23 methyl group, to generate the corresponding alcohol andrastin B, and aldehyde andrastin A. This is Cytochrome P450 monooxygenase adrA from Penicillium rubens (strain ATCC 28089 / DSM 1075 / NRRL 1951 / Wisconsin 54-1255) (Penicillium chrysogenum).